Consider the following 326-residue polypeptide: Vitamin B12 import system permease protein BtuC (326 aa).

Helical transmembrane passes span W15–E35, L61–F81, P88–G108, L112–L132, L146–F166, G184–I204, G240–I260, V274–A294, and E302–L322.

Belongs to the binding-protein-dependent transport system permease family. FecCD subfamily. In terms of assembly, the complex is composed of two ATP-binding proteins (BtuD), two transmembrane proteins (BtuC) and a solute-binding protein (BtuF).

The protein resides in the cell inner membrane. Functionally, part of the ABC transporter complex BtuCDF involved in vitamin B12 import. Involved in the translocation of the substrate across the membrane. This Salmonella choleraesuis (strain SC-B67) protein is Vitamin B12 import system permease protein BtuC.